Here is a 798-residue protein sequence, read N- to C-terminus: Glycogen phosphorylase (798 aa).

At lysine 646 the chain carries N6-(pyridoxal phosphate)lysine.

Belongs to the glycogen phosphorylase family. It depends on pyridoxal 5'-phosphate as a cofactor.

It carries out the reaction [(1-&gt;4)-alpha-D-glucosyl](n) + phosphate = [(1-&gt;4)-alpha-D-glucosyl](n-1) + alpha-D-glucose 1-phosphate. Phosphorylase is an important allosteric enzyme in carbohydrate metabolism. Enzymes from different sources differ in their regulatory mechanisms and in their natural substrates. However, all known phosphorylases share catalytic and structural properties. The protein is Glycogen phosphorylase (glgP) of Bacillus subtilis (strain 168).